The primary structure comprises 99 residues: A-type ATP synthase subunit F (99 aa).

The protein belongs to the V-ATPase F subunit family. As to quaternary structure, has multiple subunits with at least A(3), B(3), C, D, E, F, H, I and proteolipid K(x).

It localises to the cell membrane. Functionally, component of the A-type ATP synthase that produces ATP from ADP in the presence of a proton gradient across the membrane. The chain is A-type ATP synthase subunit F from Methanococcus vannielii (strain ATCC 35089 / DSM 1224 / JCM 13029 / OCM 148 / SB).